We begin with the raw amino-acid sequence, 385 residues long: Non-structural maintenance of chromosomes element 4 homolog A (385 aa).

The tract at residues 1 to 69 is disordered; it reads MSGDSSGRGP…PSDSGDEMMD (69 aa). Composition is skewed to basic and acidic residues over residues 10-21 and 42-55; these read PEGRGRGRDPHR and SARE…RPSL. Positions 56–68 are enriched in acidic residues; the sequence is EDTEPSDSGDEMM. Residue T345 is modified to Phosphothreonine. Phosphoserine is present on S377.

The protein belongs to the NSE4 family. Component of the SMC5-SMC6 complex which consists at least of SMC5, SMC6, NSMCE2, NSMCE1, NSMCE4A or EID3 and NSMCE3. NSMCE1, NSMCE4A or EID3 and NSMCE3 probably form a subcomplex that bridges the head domains of the SMC5:SMC6 heterodimer. Interacts with NSMCE3.

It localises to the nucleus. The protein resides in the chromosome. It is found in the telomere. In terms of biological role, component of the SMC5-SMC6 complex, a complex involved in DNA double-strand breaks by homologous recombination. The complex may promote sister chromatid homologous recombination by recruiting the SMC1-SMC3 cohesin complex to double-strand breaks. The complex is required for telomere maintenance via recombination in ALT (alternative lengthening of telomeres) cell lines and mediates sumoylation of shelterin complex (telosome) components which is proposed to lead to shelterin complex disassembly in ALT-associated PML bodies (APBs). Is involved in positive regulation of response to DNA damage stimulus. This Homo sapiens (Human) protein is Non-structural maintenance of chromosomes element 4 homolog A (NSMCE4A).